The sequence spans 361 residues: Peptide chain release factor 1 (361 aa).

N5-methylglutamine is present on Q237. Positions 287-297 are enriched in basic and acidic residues; the sequence is KQQKEQSDTRK. The segment at 287–313 is disordered; sequence KQQKEQSDTRKSLVGSGDRSERIRTYN.

This sequence belongs to the prokaryotic/mitochondrial release factor family. Methylated by PrmC. Methylation increases the termination efficiency of RF1.

It is found in the cytoplasm. Its function is as follows. Peptide chain release factor 1 directs the termination of translation in response to the peptide chain termination codons UAG and UAA. The sequence is that of Peptide chain release factor 1 from Francisella tularensis subsp. holarctica (strain FTNF002-00 / FTA).